The sequence spans 279 residues: MTTRIDTKFAELKAEGRPALVTYFMGGDPDLETALKVMKALPKAGADVIELGMPFSDPMADGPAIQAAGLRALNAGQTLAKTLYMAAEFRKEDDTTPIVMMGYYNPIYVYGVERFLTDAKASGVDGLIVVDLPSEMDAELCIPAMKAGINFIRLTTPTTDDKRLPKVLHNSSGFVYYVSMNGITGAAIADTAKVGEAVRHIKKSTDLPICVGFGVKTPEQAAAIATHADSVVVGTAIVNAIAGELDEKGKVKGDPVAAATRLVHALAESVRATRLEAAQ.

Catalysis depends on proton acceptor residues Glu-50 and Asp-61.

The protein belongs to the TrpA family. As to quaternary structure, tetramer of two alpha and two beta chains.

The catalysed reaction is (1S,2R)-1-C-(indol-3-yl)glycerol 3-phosphate + L-serine = D-glyceraldehyde 3-phosphate + L-tryptophan + H2O. It participates in amino-acid biosynthesis; L-tryptophan biosynthesis; L-tryptophan from chorismate: step 5/5. Its function is as follows. The alpha subunit is responsible for the aldol cleavage of indoleglycerol phosphate to indole and glyceraldehyde 3-phosphate. This is Tryptophan synthase alpha chain from Brucella abortus (strain S19).